The primary structure comprises 896 residues: Androgen receptor (896 aa).

The segment at M1–K534 is modulating. The segment at M1–A563 is interaction with ZNF318. Disordered regions lie at residues Q35 to L152 and L178 to G218. Low complexity predominate over residues L54–E78. S65 carries the phosphoserine; by CDK9 modification. Phosphoserine is present on S81. A compositionally biased stretch (low complexity) spans L178–Q189. Residues E190–G199 show a composition bias toward polar residues. At Y215 the chain carries Phosphotyrosine; by CSK. Residue S248 is modified to Phosphoserine. Y259 carries the phosphotyrosine; by CSK and TNK2 modification. A phosphotyrosine; by CSK mark is found at Y299, Y338, Y349, and Y354. Y355 is modified (phosphotyrosine; by CSK and TNK2). K378 participates in a covalent cross-link: Glycyl lysine isopeptide (Lys-Gly) (interchain with G-Cter in SUMO). Residue Y385 is modified to Phosphotyrosine; by CSK. K497 participates in a covalent cross-link: Glycyl lysine isopeptide (Lys-Gly) (interchain with G-Cter in SUMO). A phosphotyrosine; by CSK mark is found at Y511 and Y528. The interval Y528–T895 is interaction with LPXN. Positions T535 to L608 form a DNA-binding region, nuclear receptor. 2 NR C4-type zinc fingers span residues C536 to C556 and C572 to C596. The interval Y548–V638 is interaction with HIPK3. Residues Q568–T895 are interaction with CCAR1. The tract at residues M601–T895 is interaction with KAT7. S627 is subject to Phosphoserine; by STK4/MST1. The region spanning E645–I876 is the NR LBD domain. Positions 682 and 729 each coordinate 17beta-hydroxy-5alpha-androstan-3-one. Residues K822 and K824 each participate in a glycyl lysine isopeptide (Lys-Gly) (interchain with G-Cter in ubiquitin) cross-link. Residue T854 coordinates 17beta-hydroxy-5alpha-androstan-3-one. Y892 carries the phosphotyrosine; by CSK modification.

The protein belongs to the nuclear hormone receptor family. NR3 subfamily. As to quaternary structure, binds DNA as a homodimer. Part of a ternary complex containing AR, EFCAB6/DJBP and PARK7. Interacts with HIPK3 and NR0B2 in the presence of androgen. The ligand binding domain interacts with KAT7/HBO1 in the presence of dihydrotestosterone. Interacts with EFCAB6/DJBP, PQBP1, RANBP9, RBAK, SPDEF, SRA1, TGFB1I1 and RREB1. Interacts with ZMIZ1/ZIMP10 and ZMIZ2/ZMIP7 which both enhance its transactivation activity. Interacts with SLC30A9 and RAD54L2/ARIP4. Interacts with MACROD1 (via macro domain). Interacts via the ligand-binding domain with LXXLL and FXXLF motifs from NCOA1, NCOA2, NCOA3 and MAGEA11. Interacts (via nuclear receptor DNA binding domain and nuclear receptor ligand binding domain) with NCOA4. The AR N-terminal poly-Gln region binds Ran resulting in enhancement of AR-mediated transactivation. Ran-binding decreases as the poly-Gln length increases. Interacts with HIP1 (via coiled coil domain). Interacts (via ligand-binding domain) with TRIM68. Interacts with TNK2. Interacts with USP26. Interacts with RNF6. Interacts (regulated by RNF6 probably through polyubiquitination) with RNF14; regulates AR transcriptional activity. Interacts with PRMT2 and TRIM24. Interacts with RACK1. Interacts with RANBP10; this interaction enhances dihydrotestosterone-induced AR transcriptional activity. Interacts with PRPF6 in a hormone-independent way; this interaction enhances dihydrotestosterone-induced AR transcriptional activity. Interacts with STK4/MST1. Interacts with ZIPK/DAPK3. Interacts with LPXN. Interacts with MAK. Part of a complex containing AR, MAK and NCOA3. Interacts with CRY1. Interacts with CCAR1 and GATA2. Interacts with ZNF318. Interacts with BUD31. Interacts with ARID4A. Interacts with ARID4B. Interacts (via NR LBD domain) with ZBTB7A; the interaction is direct and androgen-dependent. Interacts with NCOR1. Interacts with NCOR2. Interacts with CRY2 in a ligand-dependent manner. Phosphorylated in prostate cancer cells in response to several growth factors including EGF. Phosphorylation is induced by c-Src kinase (CSK). Tyr-511 is one of the major phosphorylation sites and an increase in phosphorylation and Src kinase activity is associated with prostate cancer progression. Phosphorylation by TNK2 enhances the DNA-binding and transcriptional activity. Phosphorylation at Ser-65 by CDK9 regulates AR promoter selectivity and cell growth. In terms of processing, sumoylated on Lys-378 (major) and Lys-497. Ubiquitinated. Deubiquitinated by USP26. 'Lys-6' and 'Lys-27'-linked polyubiquitination by RNF6 modulates AR transcriptional activity and specificity. Post-translationally, palmitoylated by ZDHHC7 and ZDHHC21. Palmitoylation is required for plasma membrane targeting and for rapid intracellular signaling via ERK and AKT kinases and cAMP generation.

The protein resides in the nucleus. The protein localises to the cytoplasm. Its function is as follows. Steroid hormone receptors are ligand-activated transcription factors that regulate eukaryotic gene expression and affect cellular proliferation and differentiation in target tissues. Transcription factor activity is modulated by bound coactivator and corepressor proteins like ZBTB7A that recruits NCOR1 and NCOR2 to the androgen response elements/ARE on target genes, negatively regulating androgen receptor signaling and androgen-induced cell proliferation. Transcription activation is also down-regulated by NR0B2. Activated, but not phosphorylated, by HIPK3 and ZIPK/DAPK3. In Sus scrofa (Pig), this protein is Androgen receptor (AR).